The following is a 434-amino-acid chain: UDP-N-acetylmuramate--L-alanine ligase (434 aa).

108–114 (GSHGKTT) provides a ligand contact to ATP.

The protein belongs to the MurCDEF family.

It is found in the cytoplasm. The catalysed reaction is UDP-N-acetyl-alpha-D-muramate + L-alanine + ATP = UDP-N-acetyl-alpha-D-muramoyl-L-alanine + ADP + phosphate + H(+). The protein operates within cell wall biogenesis; peptidoglycan biosynthesis. Its function is as follows. Cell wall formation. In Geobacillus kaustophilus (strain HTA426), this protein is UDP-N-acetylmuramate--L-alanine ligase.